Here is a 974-residue protein sequence, read N- to C-terminus: Kinase-interacting protein 1 (974 aa).

In terms of domain architecture, NAB spans 10 to 90; it reads YSWWAASHIR…ERYDHLSKEL (81 aa). The segment at 151–170 is disordered; sequence STASKQKQGKQSSKIEDAAK. The stretch at 173-423 forms a coiled coil; sequence LSKNEAIEEI…DVVNQNSCLR (251 aa). Residues 586-614 form a disordered region; sequence AQPTPAEKGDEKVSAQSGNTSVYETHTQK. Residues 599-610 are compositionally biased toward polar residues; it reads SAQSGNTSVYET. The stretch at 641–697 forms a coiled coil; sequence NEYTAILKNYKEVTKKLSDIEKKDRDTEFELTLQTRELKSAIAKRDEEIHNLRQKLS. The disordered stretch occupies residues 714–740; sequence LLDPSDPSSARGLKPEDLPQIKDGDDE. Over residues 726–736 the composition is skewed to basic and acidic residues; that stretch reads LKPEDLPQIKD. 2 coiled-coil regions span residues 784–807 and 882–905; these read HQIQ…RDKE and AAKF…ELEA.

As to quaternary structure, homodimer or homooligomer. Interacts with PRK1. Post-translationally, phosphorylated by PRK1. As to expression, expressed in mature pollen grains and pollen tubes, but not in style, ovary, petal, leaf, root or sepal.

It is found in the cytoplasm. Functionally, probably involved in the receptor-like kinase-mediated signal transduction pathway. This Petunia integrifolia (Violet-flowered petunia) protein is Kinase-interacting protein 1.